A 205-amino-acid polypeptide reads, in one-letter code: Bcl2-associated agonist of cell death (205 aa).

The disordered stretch occupies residues 1-139; it reads MGTPKQPSLA…PFRGRSRSAP (139 aa). Serine 67 is modified (phosphoserine). The span at 85–98 shows a compositional bias: polar residues; the sequence is IVQQQPGQAANNSH. Phosphoserine is present on serine 113. A compositionally biased stretch (acidic residues) spans 118 to 128; the sequence is TEEDEGMEEEL. The residue at position 129 (serine 129) is a Phosphoserine. Residues arginine 132 and arginine 134 each carry the asymmetric dimethylarginine; by PRMT1 modification. The residue at position 135 (serine 135) is a Phosphoserine. Serine 137 bears the Phosphoserine; by PKA, PKB, PAK1, RPS6KA1, RPS6KB1 and PKC/PRKCQ mark. The BH3 motif lies at 148 to 162; it reads YGRELRRMSDEFEGS. Phosphoserine is present on residues serine 156 and serine 171. A disordered region spans residues 161–180; it reads GSFKGLPRPKSAGTATQMRQ.

It belongs to the Bcl-2 family. In terms of assembly, forms heterodimers with the anti-apoptotic proteins, Bcl-X(L), Bcl-2 and Bcl-W. Also binds protein S100A10. The Ser-113/Ser-137 phosphorylated form binds 14-3-3 proteins. Interacts with AKT1 and PIM3. Interacts with HIF3A (via C-terminus domain); the interaction reduces the binding between BAD and BAX. Interacts (via BH3 domain) with NOL3 (via CARD domain); preventing the association of BAD with BCL2. Interacts with GIMAP3/IAN4 and GIMAP5/IAN5. Phosphorylated at one or more of Ser-113, Ser-137, Ser-156 and Ser-171 in response to survival stimuli, which blocks its pro-apoptotic activity. Phosphorylation on Ser-137 or Ser-113 promotes heterodimerization with 14-3-3 proteins. This interaction then facilitates the phosphorylation at Ser-156, a site within the BH3 motif, leading to the release of Bcl-X(L) and the promotion of cell survival. Ser-137 is the major site of AKT/PKB phosphorylation, Ser-156 the major site of protein kinase A (CAPK) phosphorylation. In terms of processing, methylation at Arg-132 and Arg-134 by PRMT1 inhibits Akt-mediated phosphorylation at Ser-137. Expressed in all tissues tested, including brain, liver, spleen and heart. In the brain, restricted to epithelial cells of the choroid plexus. Isoform alpha is the more abundant form.

The protein localises to the mitochondrion outer membrane. It localises to the cytoplasm. Functionally, promotes cell death. Successfully competes for the binding to Bcl-X(L), Bcl-2 and Bcl-W, thereby affecting the level of heterodimerization of these proteins with BAX. Can reverse the death repressor activity of Bcl-X(L), but not that of Bcl-2. Appears to act as a link between growth factor receptor signaling and the apoptotic pathways. In Rattus norvegicus (Rat), this protein is Bcl2-associated agonist of cell death (Bad).